We begin with the raw amino-acid sequence, 772 residues long: Putative ribosomal protein S6 kinase alpha-2 (772 aa).

One can recognise a Protein kinase 1 domain in the interval 17–284 (FALLRVLGKG…VDEIKNHKFM (268 aa)). ATP-binding positions include 23–31 (LGKGAYGKV) and Lys-49. Asp-145 functions as the Proton acceptor in the catalytic mechanism. Ser-180, Ser-342, and Ser-347 each carry phosphoserine; by autocatalysis. One can recognise an AGC-kinase C-terminal domain in the interval 285 to 353 (SSIDWDAAVK…VSPSVIFAND (69 aa)). A Protein kinase 2 domain is found at 382-653 (KSDAGLLGKG…MQELTAHMWL (272 aa)). Residues 388-396 (LGKGAFSVV) and Lys-411 contribute to the ATP site. Residue Asp-500 is the Proton acceptor of the active site. A disordered region spans residues 706–772 (RGIKRQSGDK…IRETRGSDSS (67 aa)). Ser-712 is modified (phosphoserine; by autocatalysis). Polar residues-rich tracts occupy residues 718 to 727 (SGNSKNSRVT) and 739 to 748 (EMTSSTSRPS).

The protein belongs to the protein kinase superfamily. AGC Ser/Thr protein kinase family. S6 kinase subfamily. It depends on Mg(2+) as a cofactor.

It catalyses the reaction L-seryl-[protein] + ATP = O-phospho-L-seryl-[protein] + ADP + H(+). It carries out the reaction L-threonyl-[protein] + ATP = O-phospho-L-threonyl-[protein] + ADP + H(+). Activated by multiple phosphorylations on threonine and serine residues. In terms of biological role, serine/threonine kinase that may play a role in mediating the mitogen- and stress-induced effects on transcription. May repress transcription via phosphorylation of 'Ser-1' of histone H2A. May phosphorylate histone H3. The protein is Putative ribosomal protein S6 kinase alpha-2 (rskn-2) of Caenorhabditis elegans.